The sequence spans 101 residues: MYAVIRTGGKQYRVAQGDRVKIEKLAGDVGGKVNFDVLLVGGEGEAKVGTPTLAGVTVEGEIVAQDKHKKVIHFRKKKEGWTKKRGHRQPYTEVLITTVRA.

The protein belongs to the bacterial ribosomal protein bL21 family. In terms of assembly, part of the 50S ribosomal subunit. Contacts protein L20.

Functionally, this protein binds to 23S rRNA in the presence of protein L20. In Anaeromyxobacter dehalogenans (strain 2CP-1 / ATCC BAA-258), this protein is Large ribosomal subunit protein bL21.